The primary structure comprises 146 residues: D-aminoacyl-tRNA deacylase (146 aa).

The Gly-cisPro motif, important for rejection of L-amino acids signature appears at 138 to 139 (GP).

It belongs to the DTD family. In terms of assembly, homodimer.

It localises to the cytoplasm. It carries out the reaction glycyl-tRNA(Ala) + H2O = tRNA(Ala) + glycine + H(+). It catalyses the reaction a D-aminoacyl-tRNA + H2O = a tRNA + a D-alpha-amino acid + H(+). In terms of biological role, an aminoacyl-tRNA editing enzyme that deacylates mischarged D-aminoacyl-tRNAs. Also deacylates mischarged glycyl-tRNA(Ala), protecting cells against glycine mischarging by AlaRS. Acts via tRNA-based rather than protein-based catalysis; rejects L-amino acids rather than detecting D-amino acids in the active site. By recycling D-aminoacyl-tRNA to D-amino acids and free tRNA molecules, this enzyme counteracts the toxicity associated with the formation of D-aminoacyl-tRNA entities in vivo and helps enforce protein L-homochirality. The chain is D-aminoacyl-tRNA deacylase from Tolumonas auensis (strain DSM 9187 / NBRC 110442 / TA 4).